The chain runs to 171 residues: Iron-sulfur cluster assembly protein 1 (171 aa).

The transit peptide at 1–55 (MLRAGGRRLLAPGLRRVLGGGAAAPVAVGGAKAYHERVVDHYENPRNVGSFENDD) directs the protein to the mitochondrion.

The protein belongs to the NifU family. In terms of assembly, component of the core Fe-S cluster (ISC) assembly machinery. Requires [2Fe-2S] cluster as cofactor.

It is found in the mitochondrion matrix. Its pathway is cofactor biosynthesis; iron-sulfur cluster biosynthesis. Scaffold protein for the de novo synthesis of iron-sulfur (Fe-S) clusters within mitochondria, which is required for maturation of both mitochondrial and cytoplasmic [2Fe-2S] and [4Fe-4S] proteins. First, a [2Fe-2S] cluster is transiently assembled on the scaffold protein ISCU (ISU1, ISU2 or ISU3). In a second step, the cluster is released from ISCU, transferred to a glutaredoxin, followed by the formation of mitochondrial [2Fe-2S] proteins, the synthesis of [4Fe-4S] clusters and their target-specific insertion into the recipient apoproteins. Cluster assembly on ISCU depends on the function of the cysteine desulfurase complex NFS1-ISD11, which serves as the sulfur donor for cluster synthesis, the iron-binding protein frataxin as the putative iron donor, and the electron transfer chain comprised of ferredoxin reductase and ferredoxin, which receive their electrons from NADH. The chain is Iron-sulfur cluster assembly protein 1 from Oryza sativa subsp. japonica (Rice).